Here is a 235-residue protein sequence, read N- to C-terminus: Probable inactive serine protease 37 (235 aa).

A signal peptide spans 1-19 (MKYVFYLGVLAGTFFFADS). The Peptidase S1 domain maps to 20–233 (SVQKEDPAPY…YVSWIENTAK (214 aa)). Cystine bridges form between C40-C56, C131-C198, and C163-C177.

This sequence belongs to the peptidase S1 family. As to expression, testis-specific. Expressed in spermatids (at protein level).

The protein localises to the cytoplasmic vesicle. It localises to the secretory vesicle. It is found in the acrosome. Its subcellular location is the secreted. Its function is as follows. Plays a role in male fertility. May have a role in sperm migration or binding to zona-intact eggs. Involved in the activation of the proacrosin/acrosin system. The polypeptide is Probable inactive serine protease 37 (Homo sapiens (Human)).